A 161-amino-acid chain; its full sequence is Bacterioferritin (161 aa).

The 145-residue stretch at 1–145 (MKGEPKVIER…TQLDLLAKIG (145 aa)) folds into the Ferritin-like diiron domain. Fe cation-binding residues include Glu-18 and Glu-51. Heme b is bound at residue Met-52. The Fe cation site is built by His-54, Glu-94, Glu-127, and His-130.

The protein belongs to the bacterioferritin family. In terms of assembly, homooligomer of 24 subunits, arranged as 12 dimers, that are packed together to form an approximately spherical molecule with a central cavity, in which large amounts of iron can be deposited. Heme b serves as cofactor.

It catalyses the reaction 4 Fe(2+) + O2 + 4 H(+) = 4 Fe(3+) + 2 H2O. The catalysed reaction is Fe(2+)(in) = Fe(2+)(out). Functionally, iron-storage protein, whose ferroxidase center binds Fe(2+), oxidizes it using dioxygen to Fe(3+), and participates in the subsequent Fe(3+) oxide mineral core formation within the central cavity of the BFR protein shell. The chain is Bacterioferritin (bfr) from Brucella melitensis biotype 1 (strain ATCC 23456 / CCUG 17765 / NCTC 10094 / 16M).